Consider the following 350-residue polypeptide: MRVTNRSLKGREGEIAVTAETLDDLWHLKYIIEKGDMVFALTRRKADSASDKLRPEKVEKVKVRLGIRVEELEFHKFANRLRIHGPIEHGMDTGSYHTLNVEIGTNISIIKEHWKNDQLQRIQDAEEAGKRPKVVIVAVEEGDADIGFVRHYGIEVYSHIRQSSGKRETGLRNEFFREIVEQLRHAVPEDASIVIAGPGFTKEDFLKYFNETESEMASKALTEDTSMIGMSGFQEVLRRGAVDRIMQESRIARESSLMEDLIREISMDGKAAYGFADVKNALGYGAVETLLIADETLREGREKGEDIDKLLMEVEQAQGKVVVFSTAFEPGEKLHKLGGIAALLRFKVTG.

This sequence belongs to the eukaryotic release factor 1 family. Pelota subfamily. Monomer. A divalent metal cation serves as cofactor.

The protein resides in the cytoplasm. Functionally, may function in recognizing stalled ribosomes, interact with stem-loop structures in stalled mRNA molecules, and effect endonucleolytic cleavage of the mRNA. May play a role in the release non-functional ribosomes and degradation of damaged mRNAs. Has endoribonuclease activity. This chain is Protein pelota homolog, found in Methanosarcina mazei (strain ATCC BAA-159 / DSM 3647 / Goe1 / Go1 / JCM 11833 / OCM 88) (Methanosarcina frisia).